Consider the following 117-residue polypeptide: Immunoglobulin lambda variable 1-44 (117 aa).

A signal peptide spans 1–19 (MASFPLLLTLLTHCAGSWA). Gln20 is modified (pyrrolidone carboxylic acid). The framework-1 stretch occupies residues 20–44 (QSVLTQPPSASGTPGQRVTISCSGS). The region spanning 20-117 (QSVLTQPPSA…CAAWDDSLNG (98 aa)) is the Ig-like domain. A compositionally biased stretch (polar residues) spans 24–35 (TQPPSASGTPGQ). The interval 24 to 45 (TQPPSASGTPGQRVTISCSGSS) is disordered. Cys41 and Cys108 are disulfide-bonded. The segment at 45–52 (SSNIGSNT) is complementarity-determining-1. The tract at residues 53-69 (VNWYQQLPGTAPKLLIY) is framework-2. The tract at residues 70–72 (SNN) is complementarity-determining-2. Residues 73 to 108 (QRPSGVPDRFSGSKSGTSASLAISGLQSEDEADYYC) form a framework-3 region. Residues 109–117 (AAWDDSLNG) form a complementarity-determining-3 region.

In terms of assembly, immunoglobulins are composed of two identical heavy chains and two identical light chains; disulfide-linked.

Its subcellular location is the secreted. The protein localises to the cell membrane. Functionally, v region of the variable domain of immunoglobulin light chains that participates in the antigen recognition. Immunoglobulins, also known as antibodies, are membrane-bound or secreted glycoproteins produced by B lymphocytes. In the recognition phase of humoral immunity, the membrane-bound immunoglobulins serve as receptors which, upon binding of a specific antigen, trigger the clonal expansion and differentiation of B lymphocytes into immunoglobulins-secreting plasma cells. Secreted immunoglobulins mediate the effector phase of humoral immunity, which results in the elimination of bound antigens. The antigen binding site is formed by the variable domain of one heavy chain, together with that of its associated light chain. Thus, each immunoglobulin has two antigen binding sites with remarkable affinity for a particular antigen. The variable domains are assembled by a process called V-(D)-J rearrangement and can then be subjected to somatic hypermutations which, after exposure to antigen and selection, allow affinity maturation for a particular antigen. This chain is Immunoglobulin lambda variable 1-44, found in Homo sapiens (Human).